Reading from the N-terminus, the 222-residue chain is GTP cyclohydrolase 1 (222 aa).

Positions 111, 114, and 182 each coordinate Zn(2+).

This sequence belongs to the GTP cyclohydrolase I family. As to quaternary structure, toroid-shaped homodecamer, composed of two pentamers of five dimers.

It carries out the reaction GTP + H2O = 7,8-dihydroneopterin 3'-triphosphate + formate + H(+). It functions in the pathway cofactor biosynthesis; 7,8-dihydroneopterin triphosphate biosynthesis; 7,8-dihydroneopterin triphosphate from GTP: step 1/1. Its activity is regulated as follows. Allosteric enzyme. Activity is modulated by K(+), divalent cations, UTP, and tetrahydrobiopterin. Tetrahydrobiopterin is an inhibitor of this enzyme. The sequence is that of GTP cyclohydrolase 1 from Salmonella typhi.